The sequence spans 693 residues: Glycine--tRNA ligase beta subunit (693 aa).

It belongs to the class-II aminoacyl-tRNA synthetase family. In terms of assembly, tetramer of two alpha and two beta subunits.

It is found in the cytoplasm. The catalysed reaction is tRNA(Gly) + glycine + ATP = glycyl-tRNA(Gly) + AMP + diphosphate. In Vibrio vulnificus (strain YJ016), this protein is Glycine--tRNA ligase beta subunit.